We begin with the raw amino-acid sequence, 628 residues long: MVAFSALSGVSAVSLLLSLVQNAHGISLKVSTQGGNSSSPILYGFMFEDINHSGDGGIYGQMLQNPGLQGTAPNLTAWAAVGDATIAIDGDSPLTSAIPSTIKLNIADDATGAVGLTNEGYWGIPVDGSEFHSSFWIKGDYSGDITVRLVGNYTGTEYGSTTITHTSTADNFTQASVKFPTTKAPDGNVLYELTVDGSVAAGSSLNFGYLTLFGETYKSRENGLKPQLANVLDDMKGSFLRFPGGNNLEGNSAENRWKWNETIGDLWDRPGREGTWTYYNTDGLGLHEYFYWCEDLGLVPVLGVWDGFALESGGNTPLTGDALTPYIDDVLNELEYILGDTSTTYGAWRAANGQEEPWNLTMVEIGNEDMLGGGCESYAERFTAFYDAIHAAYPDLILIASTSEADCLPESMPEGSWVDYHDYSTPDGLVGQFNYFDNLNRSVPYFIGEYSRWEIDWPNMKGSVAEAVFMIGFERNSDVVKMAAYAPLLQLINSTQWTPDLIGYTQSPGDIFLSTSYYVQEMFSRNRGDTIKEVTSDSDFGPLYWVASSAGDSYYMKLANYGSETQDLTVSIPGTSTGKLTVLADSDPDAYNSDTQTLVTPSESTVQASNGTFTFSLPAWAVAVLAAN.

Positions 1 to 25 (MVAFSALSGVSAVSLLLSLVQNAHG) are cleaved as a signal peptide. 10 N-linked (GlcNAc...) asparagine glycosylation sites follow: asparagine 36, asparagine 51, asparagine 74, asparagine 152, asparagine 171, asparagine 260, asparagine 359, asparagine 440, asparagine 493, and asparagine 610.

This sequence belongs to the glycosyl hydrolase 51 family.

The protein localises to the secreted. The catalysed reaction is Hydrolysis of terminal non-reducing alpha-L-arabinofuranoside residues in alpha-L-arabinosides.. It participates in glycan metabolism; L-arabinan degradation. Alpha-L-arabinofuranosidase involved in the degradation of arabinoxylan, a major component of plant hemicellulose. Acts only on small linear 1,5-alpha-linked L-arabinofuranosyl oligosaccharides. The sequence is that of Probable alpha-L-arabinofuranosidase A (abfA) from Aspergillus niger (strain ATCC MYA-4892 / CBS 513.88 / FGSC A1513).